A 375-amino-acid chain; its full sequence is Probable cytochrome c oxidase subunit 2 (375 aa).

The next 3 helical transmembrane spans lie at 36–56 (LAVS…DNVW), 80–100 (IIAA…TVVF), and 122–142 (LTYT…TVVV). Cu cation contacts are provided by H264, C305, C309, and H313. Positions 353–363 (VATSTRPFNTD) are enriched in polar residues. Residues 353-375 (VATSTRPFNTDRTVKSAAAPEAE) are disordered.

Belongs to the cytochrome c oxidase subunit 2 family. Cu cation is required as a cofactor. It depends on heme as a cofactor.

It is found in the cell membrane. The enzyme catalyses 4 Fe(II)-[cytochrome c] + O2 + 8 H(+)(in) = 4 Fe(III)-[cytochrome c] + 2 H2O + 4 H(+)(out). Its function is as follows. Subunits I and II form the functional core of the enzyme complex. Electrons originating in cytochrome c are transferred via heme a and Cu(A) to the binuclear center formed by heme a3 and Cu(B). The protein is Probable cytochrome c oxidase subunit 2 (ctaC) of Nocardia farcinica (strain IFM 10152).